A 206-amino-acid chain; its full sequence is MMQDVSSSPVSPADDSLSNSEEEPDRQQPASGKRGARKRRSSRRSAGGSAGPGGATGGGIGGGDEPGSPAQGKRGKKSAGGGGGGGAGGGGGGGGGSSSGGGSPQSYEELQTQRVMANVRERQRTQSLNEAFAALRKIIPTLPSDKLSKIQTLKLAARYIDFLYQVLQSDELDSKMASCSYVAHERLSYAFSVWRMEGAWSMSASH.

A compositionally biased stretch (low complexity) spans 1 to 18; the sequence is MMQDVSSSPVSPADDSLS. A disordered region spans residues 1-109; it reads MMQDVSSSPV…GGGSPQSYEE (109 aa). The span at 34 to 43 shows a compositional bias: basic residues; the sequence is RGARKRRSSR. Composition is skewed to gly residues over residues 48–65 and 78–103; these read GSAG…GGDE and SAGG…GGGS. The bHLH domain occupies 112–163; it reads TQRVMANVRERQRTQSLNEAFAALRKIIPTLPSDKLSKIQTLKLAARYIDFL. The tract at residues 165-195 is sufficient for transactivation activity; that stretch reads QVLQSDELDSKMASCSYVAHERLSYAFSVWR.

In terms of assembly, efficient DNA binding requires dimerization with another bHLH protein. Homodimer or heterodimer with E proteins such as TCF3. ID1 binds preferentially to TCF3 but does not interact efficiently with TWIST1 so ID1 levels control the amount of TCF3 available to dimerize with TWIST1 and thus determine the type of dimer formed. As to expression, subset of mesodermal cells.

The protein resides in the nucleus. Its function is as follows. Acts as a transcriptional regulator. Inhibits myogenesis by sequestrating E proteins, inhibiting trans-activation by MEF2, and inhibiting DNA-binding by MYOD1 through physical interaction. This interaction probably involves the basic domains of both proteins. Also represses expression of pro-inflammatory cytokines such as TNFA and IL1B. Regulates cranial suture patterning and fusion. Activates transcription as a heterodimer with E proteins. Regulates gene expression differentially, depending on dimer composition. Homodimers induce expression of FGFR2 and POSTN while heterodimers repress FGFR2 and POSTN expression and induce THBS1 expression. Heterodimerization is also required for osteoblast differentiation. Represses the activity of the circadian transcriptional activator: NPAS2-BMAL1 heterodimer. The protein is Twist-related protein 1 (Twist1) of Mus musculus (Mouse).